The following is a 198-amino-acid chain: Probable GTP-binding protein EngB (198 aa).

The 175-residue stretch at 21-195 folds into the EngB-type G domain; sequence NFSEVAFLGR…EDIIINQTLG (175 aa). GTP contacts are provided by residues 29 to 36, 56 to 60, 81 to 84, 151 to 154, and 174 to 176; these read GRSNVGKS, GKTQL, DLPG, TKCD, and VSN. Mg(2+) contacts are provided by S36 and T58.

It belongs to the TRAFAC class TrmE-Era-EngA-EngB-Septin-like GTPase superfamily. EngB GTPase family. The cofactor is Mg(2+).

Its function is as follows. Necessary for normal cell division and for the maintenance of normal septation. The protein is Probable GTP-binding protein EngB of Campylobacter jejuni (strain RM1221).